A 382-amino-acid chain; its full sequence is Anhydro-N-acetylmuramic acid kinase (382 aa).

18 to 25 (GTSLDGVD) is an ATP binding site.

This sequence belongs to the anhydro-N-acetylmuramic acid kinase family.

The catalysed reaction is 1,6-anhydro-N-acetyl-beta-muramate + ATP + H2O = N-acetyl-D-muramate 6-phosphate + ADP + H(+). Its pathway is amino-sugar metabolism; 1,6-anhydro-N-acetylmuramate degradation. It participates in cell wall biogenesis; peptidoglycan recycling. Functionally, catalyzes the specific phosphorylation of 1,6-anhydro-N-acetylmuramic acid (anhMurNAc) with the simultaneous cleavage of the 1,6-anhydro ring, generating MurNAc-6-P. Is required for the utilization of anhMurNAc either imported from the medium or derived from its own cell wall murein, and thus plays a role in cell wall recycling. This chain is Anhydro-N-acetylmuramic acid kinase, found in Ralstonia nicotianae (strain ATCC BAA-1114 / GMI1000) (Ralstonia solanacearum).